The following is a 384-amino-acid chain: Spermidine/putrescine import ATP-binding protein PotA (384 aa).

The region spanning 6–238 is the ABC transporter domain; sequence IAFQNVSKVF…PINHFVATFI (233 aa). Residue 40–47 coordinates ATP; that stretch reads GASGSGKS.

Belongs to the ABC transporter superfamily. Spermidine/putrescine importer (TC 3.A.1.11.1) family. In terms of assembly, the complex is composed of two ATP-binding proteins (PotA), two transmembrane proteins (PotB and PotC) and a solute-binding protein (PotD).

The protein resides in the cell membrane. It catalyses the reaction ATP + H2O + polyamine-[polyamine-binding protein]Side 1 = ADP + phosphate + polyamineSide 2 + [polyamine-binding protein]Side 1.. Functionally, part of the ABC transporter complex PotABCD involved in spermidine/putrescine import. Responsible for energy coupling to the transport system. The sequence is that of Spermidine/putrescine import ATP-binding protein PotA from Streptococcus thermophilus (strain ATCC BAA-250 / LMG 18311).